A 118-amino-acid chain; its full sequence is Large ribosomal subunit protein bL20 (118 aa).

The protein belongs to the bacterial ribosomal protein bL20 family.

In terms of biological role, binds directly to 23S ribosomal RNA and is necessary for the in vitro assembly process of the 50S ribosomal subunit. It is not involved in the protein synthesizing functions of that subunit. This is Large ribosomal subunit protein bL20 from Psychrobacter arcticus (strain DSM 17307 / VKM B-2377 / 273-4).